Consider the following 303-residue polypeptide: Signal recognition particle receptor FtsY (303 aa).

GTP contacts are provided by residues Gly-108–Thr-115, Asp-190–Arg-194, and Thr-254–Asp-257.

The protein belongs to the GTP-binding SRP family. FtsY subfamily. In terms of assembly, part of the signal recognition particle protein translocation system, which is composed of SRP and FtsY. SRP is a ribonucleoprotein composed of Ffh and a 4.5S RNA molecule.

The protein resides in the cell inner membrane. The protein localises to the cytoplasm. The enzyme catalyses GTP + H2O = GDP + phosphate + H(+). Its function is as follows. Involved in targeting and insertion of nascent membrane proteins into the cytoplasmic membrane. Acts as a receptor for the complex formed by the signal recognition particle (SRP) and the ribosome-nascent chain (RNC). Interaction with SRP-RNC leads to the transfer of the RNC complex to the Sec translocase for insertion into the membrane, the hydrolysis of GTP by both Ffh and FtsY, and the dissociation of the SRP-FtsY complex into the individual components. The sequence is that of Signal recognition particle receptor FtsY from Rickettsia bellii (strain RML369-C).